A 940-amino-acid chain; its full sequence is Phosphoenolpyruvate carboxylase (940 aa).

Active-site residues include His-138 and Lys-603.

It belongs to the PEPCase type 1 family. The cofactor is Mg(2+).

The catalysed reaction is oxaloacetate + phosphate = phosphoenolpyruvate + hydrogencarbonate. Forms oxaloacetate, a four-carbon dicarboxylic acid source for the tricarboxylic acid cycle. This chain is Phosphoenolpyruvate carboxylase, found in Streptococcus thermophilus (strain CNRZ 1066).